Consider the following 196-residue polypeptide: Large ribosomal subunit protein uL5 (196 aa).

Belongs to the universal ribosomal protein uL5 family. As to quaternary structure, part of the 50S ribosomal subunit; part of the 5S rRNA/L5/L18/L25 subcomplex. Contacts the 5S rRNA and the P site tRNA. Forms a bridge to the 30S subunit in the 70S ribosome.

In terms of biological role, this is one of the proteins that bind and probably mediate the attachment of the 5S RNA into the large ribosomal subunit, where it forms part of the central protuberance. In the 70S ribosome it contacts protein S13 of the 30S subunit (bridge B1b), connecting the 2 subunits; this bridge is implicated in subunit movement. Contacts the P site tRNA; the 5S rRNA and some of its associated proteins might help stabilize positioning of ribosome-bound tRNAs. The chain is Large ribosomal subunit protein uL5 from Acidothermus cellulolyticus (strain ATCC 43068 / DSM 8971 / 11B).